We begin with the raw amino-acid sequence, 425 residues long: Protein PTI1 (425 aa).

Ser-272 is subject to Phosphoserine.

In terms of assembly, component of the cleavage and polyadenylation factor (CPF) complex, which is composed of PTI1, SYC1, SSU72, GLC7, MPE1, REF2, PFS2, PTA1, YSH1/BRR5, SWD2, CFT2/YDH1, YTH1, CFT1/YHH1, FIP1 and PAP1. Component of the APT complex, which is a subcomplex of CPF, and is composed of PTI1, SYC1, SSU72, GLC7, REF2, PTA1 and SWD2.

Its subcellular location is the nucleus. Its function is as follows. Component of the cleavage and polyadenylation factor (CPF) complex, which plays a key role in polyadenylation-dependent pre-mRNA 3'-end formation and cooperates with cleavage factors including the CFIA complex and NAB4/CFIB. Component of the APT complex, which may be involved in polyadenylation-independent transcript 3'-end formation. PTI1 is required for 3'-end formation of snoRNAs. In Saccharomyces cerevisiae (strain ATCC 204508 / S288c) (Baker's yeast), this protein is Protein PTI1 (PTI1).